A 291-amino-acid chain; its full sequence is 5-hydroxytryptamine receptor 1D (291 aa).

A helical membrane pass occupies residues 30 to 54; sequence LCDIWLSSDITCCTASILHLCVIAL. A disulfide bond links Cys31 and Cys108. Serotonin is bound by residues Asp38 and Cys42. Positions 55–57 match the DRY motif; important for ligand-induced conformation changes motif; it reads DRY. The chain crosses the membrane as a helical span at residues 75-96; it reads AAAMIAIVWAISICISIPPLFW. Asn111 carries an N-linked (GlcNAc...) asparagine glycan. Transmembrane regions (helical) follow at residues 115–138, 221–246, and 256–279; these read ISYTIYSTCGAFYIPSLLLIILYG, KTLGIILGAFIICWLPFFVASLVLPI, and ALFDFFTWLGYLNSLINPIIYTVF. Ser241 contacts serotonin. Residues 272–276 carry the NPxxY motif; important for ligand-induced conformation changes and signaling motif; sequence NPIIY.

The protein belongs to the G-protein coupled receptor 1 family. In terms of assembly, homodimer. Heterodimer with HTR1B.

The protein resides in the cell membrane. In terms of biological role, G-protein coupled receptor for 5-hydroxytryptamine (serotonin). Also functions as a receptor for ergot alkaloid derivatives, various anxiolytic and antidepressant drugs and other psychoactive substances. Ligand binding causes a conformation change that triggers signaling via guanine nucleotide-binding proteins (G proteins) and modulates the activity of downstream effectors, such as adenylate cyclase. HTR1D is coupled to G(i)/G(o) G alpha proteins and mediates inhibitory neurotransmission by inhibiting adenylate cyclase activity. Regulates the release of 5-hydroxytryptamine in the brain, and thereby affects neural activity. May also play a role in regulating the release of other neurotransmitters. May play a role in vasoconstriction. This is 5-hydroxytryptamine receptor 1D (HTR1D) from Sus scrofa (Pig).